The sequence spans 444 residues: C4-dicarboxylate transport protein (444 aa).

9 consecutive transmembrane segments (helical) span residues 17–37 (PFYTHLYVQVLAAIAAGILLG), 57–77 (LVKMIIAPVIFLTVATGIAGM), 92–112 (LYFLTFSTLALIIGLIVANVV), 139–159 (EQSIVGFLTNIIPTTIVGAFA), 161–181 (GDILQVLFFSVLFGIALAMVG), 201–221 (LVAILMKAAPIGAFGAMAFTI), 234–254 (MLIGTFYITSLLFVLVVLGAV), 320–340 (IYMTLAALFIAQATGIQLSWG), and 368–388 (AATLSVVPSVPVAGMALILGI).

The protein belongs to the dicarboxylate/amino acid:cation symporter (DAACS) (TC 2.A.23) family.

It localises to the cell inner membrane. In terms of biological role, responsible for the transport of dicarboxylates such as succinate, fumarate, and malate from the periplasm across the membrane. The protein is C4-dicarboxylate transport protein of Rhizobium johnstonii (strain DSM 114642 / LMG 32736 / 3841) (Rhizobium leguminosarum bv. viciae).